The sequence spans 314 residues: tRNA pseudouridine synthase B (314 aa).

Aspartate 41 (nucleophile) is an active-site residue.

This sequence belongs to the pseudouridine synthase TruB family. Type 1 subfamily.

It carries out the reaction uridine(55) in tRNA = pseudouridine(55) in tRNA. Responsible for synthesis of pseudouridine from uracil-55 in the psi GC loop of transfer RNAs. In Prochlorococcus marinus (strain NATL2A), this protein is tRNA pseudouridine synthase B.